The chain runs to 944 residues: snRNA-activating protein complex subunit 4 homolog (944 aa).

Residues 1 to 22 (MSDLVMFEPGASTSTDVPTNTD) form a disordered region. The span at 11 to 22 (ASTSTDVPTNTD) shows a compositional bias: polar residues. The Myb-like 1 domain maps to 177–244 (TSNFDRRQWT…AVKSKWYNEL (68 aa)). Residues 245–301 (NPKWNKEHWSNEEVEKLKYLRESPKFVSWPMLALNLGTNRTSYQCMEKYKTEVSQHS) enclose the HTH myb-type 1 domain. The H-T-H motif DNA-binding region spans 273 to 297 (WPMLALNLGTNRTSYQCMEKYKTEV). In terms of domain architecture, Myb-like 2 spans 304–350 (WSQDEDTKLIALTKITSINGHIQWDKVAQCMPGRTRQQVRTRFSHTL). HTH myb-type domains follow at residues 351 to 406 (DASV…NRSA) and 407 to 459 (HVNE…AAKL). 2 DNA-binding regions (H-T-H motif) span residues 379 to 402 (WAKV…TNVL) and 432 to 455 (WAKC…LQLI). A compositionally biased stretch (low complexity) spans 911 to 921 (ARPARPPRSSA). The tract at residues 911 to 935 (ARPARPPRSSAGTPTPSHVSIDTES) is disordered. Residues 922–935 (GTPTPSHVSIDTES) are compositionally biased toward polar residues.

In terms of tissue distribution, broadly expressed in all tissues, including head, vulva and tail.

It localises to the nucleus. In terms of biological role, binds to the promoter regions of RNA polymerase II and III small-nuclear RNA genes, type 3 RNA polymerase III non-coding RNA genes, small nucleolar RNAs and transfer RNA genes. Required for expression of mature 21U-RNAs. This Caenorhabditis elegans protein is snRNA-activating protein complex subunit 4 homolog.